The sequence spans 343 residues: Heat-inducible transcription repressor HrcA (343 aa).

This sequence belongs to the HrcA family.

Its function is as follows. Negative regulator of class I heat shock genes (grpE-dnaK-dnaJ and groELS operons). Prevents heat-shock induction of these operons. The polypeptide is Heat-inducible transcription repressor HrcA (Halalkalibacterium halodurans (strain ATCC BAA-125 / DSM 18197 / FERM 7344 / JCM 9153 / C-125) (Bacillus halodurans)).